We begin with the raw amino-acid sequence, 232 residues long: Megakaryocyte and platelet inhibitory receptor G6b (232 aa).

The N-terminal stretch at 1-17 (MALVLQLLPLLLSKVQG) is a signal peptide. Topologically, residues 18–140 (NPEVSLEGNP…GSTHGSEYSK (123 aa)) are extracellular. N-linked (GlcNAc...) asparagine glycans are attached at residues Asn-32 and Asn-112. The chain crosses the membrane as a helical span at residues 141–161 (VLIPLLGFGLVLGLGALGLVW). Residues 162–232 (WRRSCVPPSH…DASTVYAVVV (71 aa)) are Cytoplasmic-facing. 2 consecutive short sequence motifs (ITIM motif) follow at residues 200-205 (LHYADL) and 226-231 (TVYAVV). Residue Tyr-202 is modified to Phosphotyrosine.

Interacts (via ITIM motif) with PTPN6 and PTPN11. Binds to heparin. In terms of processing, N-glycosylated. May be O-glycosylated. Post-translationally, phosphorylated.

Its subcellular location is the cell membrane. Its function is as follows. Inhibitory receptor that acts as a critical regulator of hematopoietic lineage differentiation, megakaryocyte function and platelet production. Inhibits platelet aggregation and activation by agonists such as ADP and collagen-related peptide. This regulation of megakaryocate function as well as platelet production ann activation is done through the inhibition (via the 2 ITIM motifs) of the receptors CLEC1B and GP6:FcRgamma signaling. Appears to operate in a calcium-independent manner. The chain is Megakaryocyte and platelet inhibitory receptor G6b from Rattus norvegicus (Rat).